The following is a 501-amino-acid chain: Solute carrier family 2, facilitated glucose transporter member 5 (501 aa).

Methionine 1 is subject to N-acetylmethionine. Topologically, residues 1 to 17 are cytoplasmic; that stretch reads MEEKHQEETGELTLVLA. A helical membrane pass occupies residues 18–38; the sequence is LATLIAAFGSSFQYGYNVAAV. Tyrosine 31 is a binding site for D-fructose. Over 39 to 67 the chain is Extracellular; it reads NSPSEFMQQFYNDTYYDRNEENIESFTLT. N-linked (GlcNAc...) asparagine glycosylation occurs at asparagine 50. A helical transmembrane segment spans residues 68 to 90; sequence LLWSLTVSMFPFGGFIGSLMVGT. The Cytoplasmic portion of the chain corresponds to 91–97; it reads LVNKLGR. A helical transmembrane segment spans residues 98-118; that stretch reads KGALLFNNIFSILPAILMGCS. Residues 119–125 lie on the Extracellular side of the membrane; it reads QIAQSFE. Residues 126–148 form a helical membrane-spanning segment; the sequence is LIIISRLLVGICAGISSNVVPMY. The Cytoplasmic portion of the chain corresponds to 149 to 160; it reads LGELAPKNLRGA. A helical membrane pass occupies residues 161-181; sequence LGVVPQLFITVGILVAQLFGL. Residue glutamine 166 coordinates D-fructose. The Extracellular segment spans residues 182–191; sequence RSLLANEDGW. Residues 192–212 form a helical membrane-spanning segment; sequence PVLLGLTGVPAGLQLLLLPFF. Residues 213-276 are Cytoplasmic-facing; the sequence is PESPRYLLIQ…LFTMQSLRWQ (64 aa). The chain crosses the membrane as a helical span at residues 277–297; that stretch reads LISMIVLMAGQQLSGVNAIYY. Residues glutamine 287 and 295-297 contribute to the D-fructose site; that span reads IYY. The Extracellular segment spans residues 298–312; it reads YADQIYLSAGVKSDD. A helical membrane pass occupies residues 313-333; it reads VQYVTAGTGAVNVFMTILTIF. Topologically, residues 334-341 are cytoplasmic; it reads VVELWGRR. The chain crosses the membrane as a helical span at residues 342-362; it reads FLLLVGFSTCLIACLVLTAAL. The Extracellular portion of the chain corresponds to 363–370; sequence ALQNTISW. Residues 371–393 form a helical membrane-spanning segment; the sequence is MPYISIVCVIVYVIGHALGPSPI. Residue histidine 386 coordinates D-fructose. The Cytoplasmic segment spans residues 394–411; the sequence is PALLITEIFLQSSRPAAY. A helical transmembrane segment spans residues 412 to 432; that stretch reads MIGGSVHWLSNFTVGLIFPFI. 418 to 419 contributes to the D-fructose binding site; it reads HW. At 433–438 the chain is on the extracellular side; sequence QMGLGP. Residues 439–459 traverse the membrane as a helical segment; the sequence is YSFIIFATICFLTTIYIFMVV. Topologically, residues 460–501 are cytoplasmic; the sequence is PETKGRTFIEINQIFTMKNKVSDVYPKKEEELGALPHAILEQ.

This sequence belongs to the major facilitator superfamily. Sugar transporter (TC 2.A.1.1) family. Glucose transporter subfamily. As to expression, detected at the apical membrane of villi in the jejunum. Detected in jejunum mucosa. Detected in epididymis and whole testis (at protein level). Detected in small intestine, kidney and testis. Detected in cochlea, but not in inner or outer cochlear hair cells.

The protein localises to the apical cell membrane. It localises to the cell membrane. Its subcellular location is the sarcolemma. The enzyme catalyses D-fructose(out) = D-fructose(in). With respect to regulation, fructose uptake is inhibited by cytochalasin B. Its function is as follows. Functions as a fructose transporter that has only low activity with other monosaccharides. Can mediate the uptake of deoxyglucose, but with low efficiency. Essential for fructose uptake in the small intestine. Plays a role in the regulation of salt uptake and blood pressure in response to dietary fructose. Required for the development of high blood pressure in response to high dietary fructose intake. The protein is Solute carrier family 2, facilitated glucose transporter member 5 of Mus musculus (Mouse).